Reading from the N-terminus, the 178-residue chain is Adenine phosphoribosyltransferase (178 aa).

Belongs to the purine/pyrimidine phosphoribosyltransferase family. Homodimer.

The protein localises to the cytoplasm. It catalyses the reaction AMP + diphosphate = 5-phospho-alpha-D-ribose 1-diphosphate + adenine. It functions in the pathway purine metabolism; AMP biosynthesis via salvage pathway; AMP from adenine: step 1/1. Functionally, catalyzes a salvage reaction resulting in the formation of AMP, that is energically less costly than de novo synthesis. This Cereibacter sphaeroides (strain ATCC 17023 / DSM 158 / JCM 6121 / CCUG 31486 / LMG 2827 / NBRC 12203 / NCIMB 8253 / ATH 2.4.1.) (Rhodobacter sphaeroides) protein is Adenine phosphoribosyltransferase.